The chain runs to 272 residues: 2-amino-3,7-dideoxy-D-threo-hept-6-ulosonate synthase (272 aa).

D33 functions as the Proton acceptor in the catalytic mechanism. 1-deoxy-D-threo-hexo-2,5-diulose 6-phosphate-binding positions include 33-37 and 153-155; these read DHGVS and YPR. Y153 (proton donor) is an active-site residue. The active-site Schiff-base intermediate with substrate is the K184. 1-deoxy-D-threo-hexo-2,5-diulose 6-phosphate-binding positions include 209–210 and 237–238; these read GG and GR.

It belongs to the DeoC/FbaB aldolase family. ADHS subfamily. Homodecamer.

The catalysed reaction is 1-deoxy-D-threo-hexo-2,5-diulose 6-phosphate + L-aspartate 4-semialdehyde = 2,3-dioxopropyl phosphate + 2-amino-2,3,7-trideoxy-D-lyxo-hept-6-ulosonate. Catalyzes a transaldol reaction between 6-deoxy-5-ketofructose 1-phosphate (DKFP) and L-aspartate semialdehyde (ASA) with an elimination of hydroxypyruvaldehyde phosphate to yield 2-amino-3,7-dideoxy-D-threo-hept-6-ulosonate (ADH). Plays a key role in an alternative pathway of the biosynthesis of 3-dehydroquinate (DHQ), which is involved in the canonical pathway for the biosynthesis of aromatic amino acids. The chain is 2-amino-3,7-dideoxy-D-threo-hept-6-ulosonate synthase from Methanococcus maripaludis (strain C5 / ATCC BAA-1333).